The following is a 376-amino-acid chain: tRNA-specific 2-thiouridylase MnmA (376 aa).

ATP-binding positions include 14-21 (GMSGGVDS) and M40. The interaction with target base in tRNA stretch occupies residues 100–102 (NPD). Catalysis depends on C105, which acts as the Nucleophile. The cysteines at positions 105 and 202 are disulfide-linked. G129 is an ATP binding site. An interaction with tRNA region spans residues 152 to 154 (KDQ). C202 acts as the Cysteine persulfide intermediate in catalysis. The interval 315–316 (RY) is interaction with tRNA.

Belongs to the MnmA/TRMU family.

The protein resides in the cytoplasm. It catalyses the reaction S-sulfanyl-L-cysteinyl-[protein] + uridine(34) in tRNA + AH2 + ATP = 2-thiouridine(34) in tRNA + L-cysteinyl-[protein] + A + AMP + diphosphate + H(+). Functionally, catalyzes the 2-thiolation of uridine at the wobble position (U34) of tRNA, leading to the formation of s(2)U34. The protein is tRNA-specific 2-thiouridylase MnmA of Lactococcus lactis subsp. cremoris (strain SK11).